The following is a 770-amino-acid chain: Probable methyltransferase PMT24 (770 aa).

Residues 1-17 (MAMGKYSRVDGKKSSGY) lie on the Cytoplasmic side of the membrane. The helical; Signal-anchor for type II membrane protein transmembrane segment at 18–38 (GLTITIVLIVSLCLVGAWMFM) threads the bilayer. The Lumenal portion of the chain corresponds to 39-770 (SSWSAPTESI…EAETIQSAIA (732 aa)). Composition is skewed to basic and acidic residues over residues 54–81 (ERTK…FPDE) and 93–164 (NEEK…KSED). The segment at 54–223 (ERTKDVDTTK…STGSGAWSTQ (170 aa)) is disordered. N-linked (GlcNAc...) asparagine glycosylation is found at asparagine 160 and asparagine 166. Residues 212 to 223 (ESSTGSGAWSTQ) are compositionally biased toward polar residues. Asparagine 244 and asparagine 363 each carry an N-linked (GlcNAc...) asparagine glycan.

It belongs to the methyltransferase superfamily.

The protein resides in the golgi apparatus membrane. In Arabidopsis thaliana (Mouse-ear cress), this protein is Probable methyltransferase PMT24.